Here is a 257-residue protein sequence, read N- to C-terminus: Phosphonates import ATP-binding protein PhnC (257 aa).

In terms of domain architecture, ABC transporter spans 2 to 246 (IEFRNVSKVY…KFAEIYGDVV (245 aa)). Position 35-42 (35-42 (GLSGAGKS)) interacts with ATP.

It belongs to the ABC transporter superfamily. Phosphonates importer (TC 3.A.1.9.1) family. The complex is composed of two ATP-binding proteins (PhnC), two transmembrane proteins (PhnE) and a solute-binding protein (PhnD).

It localises to the cell membrane. It carries out the reaction phosphonate(out) + ATP + H2O = phosphonate(in) + ADP + phosphate + H(+). Its function is as follows. Part of the ABC transporter complex PhnCDE involved in phosphonates import. Responsible for energy coupling to the transport system. The polypeptide is Phosphonates import ATP-binding protein PhnC (Bacillus anthracis).